We begin with the raw amino-acid sequence, 127 residues long: Small ribosomal subunit protein uS11 (127 aa).

The protein belongs to the universal ribosomal protein uS11 family. Part of the 30S ribosomal subunit. Interacts with proteins S7 and S18. Binds to IF-3.

Located on the platform of the 30S subunit, it bridges several disparate RNA helices of the 16S rRNA. Forms part of the Shine-Dalgarno cleft in the 70S ribosome. The protein is Small ribosomal subunit protein uS11 of Chlorobium chlorochromatii (strain CaD3).